Reading from the N-terminus, the 173-residue chain is Large ribosomal RNA subunit accumulation protein YceD (173 aa).

This sequence belongs to the DUF177 domain family.

Plays a role in synthesis, processing and/or stability of 23S rRNA. This chain is Large ribosomal RNA subunit accumulation protein YceD (yceD), found in Escherichia coli O157:H7.